The primary structure comprises 206 residues: Small ribosomal subunit protein uS4 (206 aa).

Residues 96–156 (GRLDNVVYRM…EKSKKQARIK (61 aa)) enclose the S4 RNA-binding domain.

This sequence belongs to the universal ribosomal protein uS4 family. Part of the 30S ribosomal subunit. Contacts protein S5. The interaction surface between S4 and S5 is involved in control of translational fidelity.

In terms of biological role, one of the primary rRNA binding proteins, it binds directly to 16S rRNA where it nucleates assembly of the body of the 30S subunit. Functionally, with S5 and S12 plays an important role in translational accuracy. This is Small ribosomal subunit protein uS4 from Haemophilus influenzae (strain 86-028NP).